A 473-amino-acid chain; its full sequence is Flavin-dependent L-tryptophan oxidase RebO (473 aa).

Residues 1 to 21 form the signal peptide; it reads MSRGHKKITVLGAGVAGLVAA. FAD contacts are provided by residues 15 to 16, 35 to 36, R43, 61 to 64, E444, and 451 to 456; these read VA, EG, GAMR, and AWIDGA.

It belongs to the flavin monoamine oxidase family. RebO subfamily. In terms of assembly, homodimer. FAD is required as a cofactor.

It catalyses the reaction 7-chloro-L-tryptophan + O2 = 3-(7-chloroindol-3-yl)-2-iminopropanoate + H2O2. The catalysed reaction is L-tryptophan + O2 = 2-iminio-3-(indol-3-yl)propanoate + H2O2. Functionally, involved in the biosynthesis of the indolocarbazole antitumor agent rebeccamycin. It generates the imine form of 7-chloroindole 3-pyruvate (7Cl-IPA) from 7-chloro-L-tryptophan (7Cl-Trp), with concomitant two-electron reduction of O(2) to H(2)O(2). The enzyme is also active with L-tryptophan as substrate. This is Flavin-dependent L-tryptophan oxidase RebO (rebO) from Lentzea aerocolonigenes (Lechevalieria aerocolonigenes).